The sequence spans 85 residues: Protein AC4 (85 aa).

Residue glycine 2 is the site of N-myristoyl glycine; by host attachment.

The protein belongs to the geminiviridae protein AC4/C4 family. As to quaternary structure, interacts with Arabidopsis thaliana ASK7/ASK-eta and ASK6/ASK-zeta proteins. Phosphorylated by Arabidopsis thaliana ASK7/ASK-eta mainly on threonine and serine residues.

Its subcellular location is the host cell membrane. In terms of biological role, pathogenicity determinant. May act as a suppressor of RNA-mediated gene silencing, also known as post-transcriptional gene silencing (PTGS), a mechanism of plant viral defense that limits the accumulation of viral RNAs. May repress the AL61 promoter. The polypeptide is Protein AC4 (Solanum lycopersicum (Tomato)).